Reading from the N-terminus, the 392-residue chain is Outer membrane protein assembly factor BamB (392 aa).

The signal sequence occupies residues 1–19 (MQLRKLLLPGLLSVTLLSG). A lipid anchor (N-palmitoyl cysteine) is attached at Cys-20. Cys-20 is lipidated: S-diacylglycerol cysteine.

Belongs to the BamB family. As to quaternary structure, part of the Bam complex, which is composed of the outer membrane protein BamA, and four lipoproteins BamB, BamC, BamD and BamE.

It is found in the cell outer membrane. Part of the outer membrane protein assembly complex, which is involved in assembly and insertion of beta-barrel proteins into the outer membrane. The protein is Outer membrane protein assembly factor BamB of Salmonella typhimurium (strain LT2 / SGSC1412 / ATCC 700720).